The chain runs to 672 residues: DNA ligase (672 aa).

Residues 32 to 36 (DAEYD), 81 to 82 (SL), and E113 contribute to the NAD(+) site. K115 serves as the catalytic N6-AMP-lysine intermediate. Residues R136, E173, K290, and K314 each coordinate NAD(+). Residues C408, C411, C426, and C432 each coordinate Zn(2+). Residues 594 to 672 (EIDSPFAGKT…EAEMLRLLGE (79 aa)) form the BRCT domain.

Belongs to the NAD-dependent DNA ligase family. LigA subfamily. Mg(2+) is required as a cofactor. The cofactor is Mn(2+).

The enzyme catalyses NAD(+) + (deoxyribonucleotide)n-3'-hydroxyl + 5'-phospho-(deoxyribonucleotide)m = (deoxyribonucleotide)n+m + AMP + beta-nicotinamide D-nucleotide.. Functionally, DNA ligase that catalyzes the formation of phosphodiester linkages between 5'-phosphoryl and 3'-hydroxyl groups in double-stranded DNA using NAD as a coenzyme and as the energy source for the reaction. It is essential for DNA replication and repair of damaged DNA. The protein is DNA ligase of Cronobacter sakazakii (strain ATCC BAA-894) (Enterobacter sakazakii).